A 210-amino-acid polypeptide reads, in one-letter code: Somatotropin-2 (210 aa).

Residues 1-22 (MARALVLLSVVLVSLLVNQGRA) form the signal peptide. Zn(2+) is bound at residue His-38. Cys-71 and Cys-183 are disulfide-bonded. Glu-192 serves as a coordination point for Zn(2+). A disulfide bond links Cys-200 and Cys-208.

The protein belongs to the somatotropin/prolactin family.

It is found in the secreted. Functionally, growth hormone plays an important role in growth control and is involved in the regulation of several anabolic processes. Implicated as an osmoregulatory substance important for seawater adaptation. The chain is Somatotropin-2 (gh2) from Carassius auratus (Goldfish).